We begin with the raw amino-acid sequence, 382 residues long: Na(+)/H(+) antiporter NhaA (382 aa).

Helical transmembrane passes span 14–34 (AGGI…NSSF), 49–69 (MSVS…LIGL), 87–107 (IFPA…YVAF), 117–137 (GWAI…ALLG), 146–166 (VFLL…IAFF), 171–191 (LSVL…LLNS), 205–225 (FILW…GVVL), 247–267 (ALHP…NAGI), 285–305 (VALG…YVAV), 321–341 (IFAV…ISSL), and 356–376 (LGIL…LHIS).

Belongs to the NhaA Na(+)/H(+) (TC 2.A.33) antiporter family.

The protein resides in the cell inner membrane. The enzyme catalyses Na(+)(in) + 2 H(+)(out) = Na(+)(out) + 2 H(+)(in). Na(+)/H(+) antiporter that extrudes sodium in exchange for external protons. The protein is Na(+)/H(+) antiporter NhaA of Aliivibrio salmonicida (strain LFI1238) (Vibrio salmonicida (strain LFI1238)).